Consider the following 839-residue polypeptide: Lon protease (839 aa).

In terms of domain architecture, Lon N-terminal spans 31–224 (LFLIPIKSRP…KVLLFLKKEI (194 aa)). 377 to 384 (GPPGVGKT) contributes to the ATP binding site. Residues 613 to 790 (ASVPGTALGL…EEVALLLFDE (178 aa)) enclose the Lon proteolytic domain. Residues Ser-696 and Lys-739 contribute to the active site. The segment at 807-839 (IVNPTRKLSPKKKTTQKQKLSLSKQKGNNQKKK) is disordered. Residues 823–832 (KQKLSLSKQK) are compositionally biased toward low complexity.

It belongs to the peptidase S16 family. As to quaternary structure, homohexamer. Organized in a ring with a central cavity.

The protein resides in the cytoplasm. It carries out the reaction Hydrolysis of proteins in presence of ATP.. In terms of biological role, ATP-dependent serine protease that mediates the selective degradation of mutant and abnormal proteins as well as certain short-lived regulatory proteins. Required for cellular homeostasis and for survival from DNA damage and developmental changes induced by stress. Degrades polypeptides processively to yield small peptide fragments that are 5 to 10 amino acids long. Binds to DNA in a double-stranded, site-specific manner. This is Lon protease from Leptospira interrogans serogroup Icterohaemorrhagiae serovar copenhageni (strain Fiocruz L1-130).